We begin with the raw amino-acid sequence, 378 residues long: Non-functional pseudokinase ZRK6 (378 aa).

One can recognise a Protein kinase domain in the interval 34 to 378 (DGKCNPIKNF…SNNRSQMSSI (345 aa)). ATP-binding positions include 40-48 (IKNFSYDQI) and Lys83.

This sequence belongs to the protein kinase superfamily. Ser/Thr protein kinase family. ZRK subfamily. In terms of assembly, interacts with RPP13L4/ZAR1.

The sequence is that of Non-functional pseudokinase ZRK6 from Arabidopsis thaliana (Mouse-ear cress).